Reading from the N-terminus, the 370-residue chain is Alpha-ketoglutarate-dependent dioxygenase cnsP (370 aa).

Residues 1–12 show a composition bias toward low complexity; it reads MSTTTVITPGTI. The disordered stretch occupies residues 1–20; that stretch reads MSTTTVITPGTITREKNENG. Substrate is bound at residue His131. Fe cation contacts are provided by His169 and Asp171. Thr197 contacts 2-oxoglutarate. His321 is a binding site for Fe cation. 2 residues coordinate 2-oxoglutarate: Arg333 and Arg337. Arg337 is a substrate binding site.

This sequence belongs to the TfdA dioxygenase family. It depends on Fe(2+) as a cofactor.

The protein operates within alkaloid biosynthesis. In terms of biological role, alpha-ketoglutarate-dependent dioxygenase; part of the gene cluster that mediates the biosynthesis of communesins, a prominent class of indole alkaloids with great potential as pharmaceuticals. Communesins are biosynthesized by the coupling of tryptamine and aurantioclavine, two building blocks derived from L-tryptophan. The L-tryptophan decarboxylase cnsB converts L-tryptophan to tryptamine, whereas the tryptophan dimethylallyltransferase cnsF converts L-tryptophan to 4-dimethylallyl tryptophan which is further transformed to aurantioclavine by the aurantioclavine synthase cnsA, probably aided by the catalase cnsD. The cytochrome P450 monooxygenase cnsC catalyzes the heterodimeric coupling between the two different indole moieties, tryptamine and aurantioclavine, to construct vicinal quaternary stereocenters and yield the heptacyclic communesin scaffold. The O-methyltransferase cnsE then methylates the communesin scaffold to produce communesin K, the simplest characterized communesin that contains the heptacyclic core. The dioxygenase cnsJ converts communesin K into communesin I. Acylation to introduce the hexadienyl group at position N16 of communesin I by the acyltransferase cnsK leads to the production of communesin B. The hexadienyl group is produced by the highly reducing polyketide synthase cnsI, before being hydrolytically removed from cnsI by the serine hydrolase cnsH, converted into hexadienyl-CoA by the CoA ligase cnsG, and then transferred to communesin I by cnsK. Surprisingly, cnsK may also be a promiscuous acyltransferase that can tolerate a range of acyl groups, including acetyl-, propionyl-, and butyryl-CoA, which lead to communesins A, G and H respectively. The roles of the alpha-ketoglutarate-dependent dioxygenases cnsM and cnsP have still to be determined. The polypeptide is Alpha-ketoglutarate-dependent dioxygenase cnsP (Penicillium expansum (Blue mold rot fungus)).